The chain runs to 178 residues: uncharacterized protein (178 aa).

A disordered region spans residues 64–103 (GVSDNTNKTTAKDNVSDKSSENEVAQPKQVTPPVDATGNT). The span at 73 to 84 (TAKDNVSDKSSE) shows a compositional bias: basic and acidic residues.

This is an uncharacterized protein from Acidianus sp. F28 (AFV-2).